Consider the following 353-residue polypeptide: Chorismate synthase (353 aa).

Positions 48 and 54 each coordinate NADP(+). FMN contacts are provided by residues 125-127 (RSS), 238-239 (NA), Gly278, 293-297 (KPTSS), and Arg319.

This sequence belongs to the chorismate synthase family. In terms of assembly, homotetramer. Requires FMNH2 as cofactor.

It carries out the reaction 5-O-(1-carboxyvinyl)-3-phosphoshikimate = chorismate + phosphate. It participates in metabolic intermediate biosynthesis; chorismate biosynthesis; chorismate from D-erythrose 4-phosphate and phosphoenolpyruvate: step 7/7. Catalyzes the anti-1,4-elimination of the C-3 phosphate and the C-6 proR hydrogen from 5-enolpyruvylshikimate-3-phosphate (EPSP) to yield chorismate, which is the branch point compound that serves as the starting substrate for the three terminal pathways of aromatic amino acid biosynthesis. This reaction introduces a second double bond into the aromatic ring system. This is Chorismate synthase from Bordetella pertussis (strain Tohama I / ATCC BAA-589 / NCTC 13251).